The chain runs to 401 residues: Argininosuccinate synthase (401 aa).

ATP-binding positions include 9–17 (AFSGGLDTS) and Ala35. L-citrulline-binding residues include Tyr88 and Ser93. Residue Gly117 participates in ATP binding. L-aspartate contacts are provided by Thr119, Asn123, and Asp124. Asn123 is an L-citrulline binding site. Arg127 and Tyr273 together coordinate L-citrulline.

This sequence belongs to the argininosuccinate synthase family. Type 1 subfamily. Homotetramer.

Its subcellular location is the cytoplasm. The enzyme catalyses L-citrulline + L-aspartate + ATP = 2-(N(omega)-L-arginino)succinate + AMP + diphosphate + H(+). It functions in the pathway amino-acid biosynthesis; L-arginine biosynthesis; L-arginine from L-ornithine and carbamoyl phosphate: step 2/3. The chain is Argininosuccinate synthase from Xylella fastidiosa (strain Temecula1 / ATCC 700964).